Here is a 254-residue protein sequence, read N- to C-terminus: DNA repair protein RecO (254 aa).

Belongs to the RecO family.

In terms of biological role, involved in DNA repair and RecF pathway recombination. In Gluconacetobacter diazotrophicus (strain ATCC 49037 / DSM 5601 / CCUG 37298 / CIP 103539 / LMG 7603 / PAl5), this protein is DNA repair protein RecO.